The primary structure comprises 70 residues: U2-agatoxin-Ao1n (70 aa).

An N-terminal signal peptide occupies residues 1 to 20; it reads MRAIISLLLISAMVFYIIAA. A propeptide spanning residues 21–34 is cleaved from the precursor; it reads VPEEEGLQLSEDER. 3 disulfide bridges follow: Cys37–Cys53, Cys44–Cys58, and Cys52–Cys68. The residue at position 69 (Leu69) is a Leucine amide.

The protein belongs to the neurotoxin 01 (U2-agtx) family. As to expression, expressed by the venom gland.

The protein resides in the secreted. In terms of biological role, insect active toxin causing rapid but reversible paralysis in crickets. No activity shown in mammals. Does not show effect on mammalian voltage-gated calcium channels. The sequence is that of U2-agatoxin-Ao1n from Agelena orientalis (Funnel-web spider).